Reading from the N-terminus, the 349-residue chain is UDP-N-acetylenolpyruvoylglucosamine reductase (349 aa).

The FAD-binding PCMH-type domain occupies 25–197 (GIAARARFAA…VAVTFRLPKQ (173 aa)). Arg-173 is an active-site residue. The active-site Proton donor is Ser-249. Glu-345 is an active-site residue.

It belongs to the MurB family. It depends on FAD as a cofactor.

It localises to the cytoplasm. The catalysed reaction is UDP-N-acetyl-alpha-D-muramate + NADP(+) = UDP-N-acetyl-3-O-(1-carboxyvinyl)-alpha-D-glucosamine + NADPH + H(+). It functions in the pathway cell wall biogenesis; peptidoglycan biosynthesis. Functionally, cell wall formation. The sequence is that of UDP-N-acetylenolpyruvoylglucosamine reductase from Burkholderia cenocepacia (strain HI2424).